We begin with the raw amino-acid sequence, 478 residues long: F-box protein YDR306C (478 aa).

Over residues Met-1–Tyr-14 the composition is skewed to basic residues. Disordered regions lie at residues Met-1–Ala-32 and Arg-67–Ser-101. The span at Gln-80 to Ser-90 shows a compositional bias: low complexity. Basic and acidic residues predominate over residues Lys-91–Ser-101. The region spanning Lys-112–Ala-173 is the F-box domain.

Interacts with SKP1. Component of the probable SCF(YDR306C) complex containing CDC53, SKP1, RBX1 and YDR306C. Autoubiquitinated by the E3 ubiquitin ligase complex in conjunction with the E2 enzyme CDC34.

It participates in protein modification; protein ubiquitination. Functionally, substrate recognition component of a SCF (SKP1-CUL1-F-box protein) E3 ubiquitin-protein ligase complex which mediates the ubiquitination and subsequent proteasomal degradation of target proteins. Probably recognizes and binds to phosphorylated target proteins. This Saccharomyces cerevisiae (strain ATCC 204508 / S288c) (Baker's yeast) protein is F-box protein YDR306C.